We begin with the raw amino-acid sequence, 335 residues long: Peroxidase 2 (335 aa).

An N-terminal signal peptide occupies residues 1 to 29 (MAAATAPKTMPSSVFAAALLLLAAAACQA). 4 disulfides stabilise this stretch: C44–C125, C77–C82, C131–C329, and C212–C238. The active-site Proton acceptor is H75. Residues D76, V79, G81, D83, and S85 each contribute to the Ca(2+) site. Residues N166 and N180 are each glycosylated (N-linked (GlcNAc...) asparagine). Position 205 (H205) interacts with heme b. T206 serves as a coordination point for Ca(2+). A glycan (N-linked (GlcNAc...) asparagine) is linked at N241. Ca(2+) is bound by residues D253, T256, and D261.

The protein belongs to the peroxidase family. Classical plant (class III) peroxidase subfamily. Heme b serves as cofactor. The cofactor is Ca(2+). Expressed in the elongating region of young roots, and in root vascular tissues and epidermis.

It localises to the secreted. The catalysed reaction is 2 a phenolic donor + H2O2 = 2 a phenolic radical donor + 2 H2O. Functionally, removal of H(2)O(2), oxidation of toxic reductants, biosynthesis and degradation of lignin, suberization, auxin catabolism, response to environmental stresses such as wounding, pathogen attack and oxidative stress. These functions might be dependent on each isozyme/isoform in each plant tissue. This chain is Peroxidase 2 (PER2), found in Zea mays (Maize).